The sequence spans 251 residues: D-aminoacyl-tRNA deacylase (251 aa).

It belongs to the DtdA deacylase family. Monomer. The cofactor is Zn(2+).

The catalysed reaction is a D-aminoacyl-tRNA + H2O = a tRNA + a D-alpha-amino acid + H(+). The enzyme catalyses glycyl-tRNA(Ala) + H2O = tRNA(Ala) + glycine + H(+). Its function is as follows. D-aminoacyl-tRNA deacylase with broad substrate specificity. By recycling D-aminoacyl-tRNA to D-amino acids and free tRNA molecules, this enzyme counteracts the toxicity associated with the formation of D-aminoacyl-tRNA entities in vivo. This chain is D-aminoacyl-tRNA deacylase, found in Pyrobaculum aerophilum (strain ATCC 51768 / DSM 7523 / JCM 9630 / CIP 104966 / NBRC 100827 / IM2).